Consider the following 389-residue polypeptide: Succinate--CoA ligase [ADP-forming] subunit beta (389 aa).

The region spanning 9–244 (KQLFEHYGLP…LTQNDAREAE (236 aa)) is the ATP-grasp domain. ATP-binding positions include K46, 53–55 (GRG), E99, C102, and E107. 2 residues coordinate Mg(2+): N199 and D213. Substrate is bound by residues N264 and 321-323 (GIV).

Belongs to the succinate/malate CoA ligase beta subunit family. As to quaternary structure, heterotetramer of two alpha and two beta subunits. Mg(2+) serves as cofactor.

The enzyme catalyses succinate + ATP + CoA = succinyl-CoA + ADP + phosphate. The catalysed reaction is GTP + succinate + CoA = succinyl-CoA + GDP + phosphate. Its pathway is carbohydrate metabolism; tricarboxylic acid cycle; succinate from succinyl-CoA (ligase route): step 1/1. Its function is as follows. Succinyl-CoA synthetase functions in the citric acid cycle (TCA), coupling the hydrolysis of succinyl-CoA to the synthesis of either ATP or GTP and thus represents the only step of substrate-level phosphorylation in the TCA. The beta subunit provides nucleotide specificity of the enzyme and binds the substrate succinate, while the binding sites for coenzyme A and phosphate are found in the alpha subunit. The sequence is that of Succinate--CoA ligase [ADP-forming] subunit beta from Haemophilus influenzae (strain ATCC 51907 / DSM 11121 / KW20 / Rd).